The following is a 182-amino-acid chain: QELVDVEGKTVRNGGTYYLVPQLRPGGGGMEAAKVGNEDCPLTVVKSLDENSNGEPIRIASRLRSTFIPEYSLVNLGFADPPKCAPSPFWTVVKDQSERLPSIKLGEYKDSELDYPFKFERVYAASKMYAYKLLYCGSEDEEEEMMCKDIGVYRDQEGYQRLVVSKHNPLVVGFKKAESSTT.

Residue Gln1 is modified to Pyrrolidone carboxylic acid. Cystine bridges form between Cys40/Cys84 and Cys136/Cys147.

The protein belongs to the protease inhibitor I3 (leguminous Kunitz-type inhibitor) family.

This Psophocarpus tetragonolobus (Winged bean) protein is Trypsin inhibitor 2.